The sequence spans 328 residues: Gonadotropin-releasing hormone receptor (328 aa).

Residues 1-38 (MANSASPEQNQNHCSAINSSILLTQGNLPTLTLSGKIR) are Extracellular-facing. N-linked (GlcNAc...) asparagine glycosylation occurs at Asn18. A helical transmembrane segment spans residues 39 to 58 (VTVTFFLFLLSTAFNASFLL). At 59–77 (KLQKWTQRKEKGKKLSRMK) the chain is on the cytoplasmic side. Residues 78–97 (VLLKHLTLANLLETLIVMPL) form a helical membrane-spanning segment. Residues 98 to 115 (DGMWNITVQWYAGEFLCK) are Extracellular-facing. An N-linked (GlcNAc...) asparagine glycan is attached at Asn102. Cys114 and Cys196 form a disulfide bridge. Residues 116 to 137 (VLSYLKLFSMYAPAFMMVVISL) form a helical membrane-spanning segment. Residues 138 to 164 (DRSLAITRPLAVKSNSRLGRFMIGLAW) lie on the Cytoplasmic side of the membrane. Residues 165–184 (LLSSIFAGPQLYIFRMIHLA) form a helical membrane-spanning segment. At 185–212 (DSSGQTEGFSQCVTHGSFPQWWHQAFYN) the chain is on the extracellular side. Residues 213–232 (FFTFSCLFIIPLLIMLICNA) traverse the membrane as a helical segment. At 233–281 (KIMFTLTRVLQQDPHNLQLNQSKNNIPRARLRTLKMTVAFAASFIVCWT) the chain is on the cytoplasmic side. A helical transmembrane segment spans residues 282 to 300 (PYYVLGIWYWFDPEMVNRV). Residues 301 to 306 (SDPVNH) are Extracellular-facing. Residues 307–326 (FFFLFAFLNPCFDPLIYGYF) traverse the membrane as a helical segment. At 327 to 328 (SL) the chain is on the cytoplasmic side.

The protein belongs to the G-protein coupled receptor 1 family. In terms of tissue distribution, pituitary gland.

It localises to the cell membrane. Its function is as follows. Receptor for gonadotropin releasing hormone (GnRH) that mediates the action of GnRH to stimulate the secretion of the gonadotropic hormones luteinizing hormone (LH) and follicle-stimulating hormone (FSH). This receptor mediates its action by association with G-proteins that activate a phosphatidylinositol-calcium second messenger system. The protein is Gonadotropin-releasing hormone receptor (GNRHR) of Sus scrofa (Pig).